Reading from the N-terminus, the 140-residue chain is Transcriptional regulator YdaT (140 aa).

In terms of biological role, transcriptional regulator that causes a severe detrimental growth effect and reduces cell viability. When expressed, it alters expression of a variety of bacterial regulons normally controlled by the transcriptional regulatory protein RcsA, resulting in deficient lipopolysaccharide biosynthesis and cell division. YdaT has no effect on Rac prophage excision. Overexpression of ydaST reduces growth and leads to loss of cell viability. May contribute to toxicity and morphological defects. This Escherichia coli (strain K12) protein is Transcriptional regulator YdaT (ydaT).